A 362-amino-acid polypeptide reads, in one-letter code: Alanine racemase (362 aa).

The active-site Proton acceptor; specific for D-alanine is lysine 35. N6-(pyridoxal phosphate)lysine is present on lysine 35. Position 130 (arginine 130) interacts with substrate. Tyrosine 257 functions as the Proton acceptor; specific for L-alanine in the catalytic mechanism. Substrate is bound at residue methionine 305.

This sequence belongs to the alanine racemase family. Pyridoxal 5'-phosphate is required as a cofactor.

It carries out the reaction L-alanine = D-alanine. Its pathway is amino-acid biosynthesis; D-alanine biosynthesis; D-alanine from L-alanine: step 1/1. Its function is as follows. Catalyzes the interconversion of L-alanine and D-alanine. May also act on other amino acids. The polypeptide is Alanine racemase (alr) (Nitrosomonas europaea (strain ATCC 19718 / CIP 103999 / KCTC 2705 / NBRC 14298)).